The chain runs to 297 residues: Universal stress protein MT2698 (297 aa).

ATP-binding positions include glycine 13, alanine 43, 117 to 123, arginine 127, 131 to 132, glycine 165, aspartate 198, 262 to 268, and 276 to 278; these read GCLGSGR, SV, GSRGRGG, and SVG.

The protein belongs to the universal stress protein A family. As to quaternary structure, homodimer.

In terms of biological role, may play a role in the establishment of a persistent infection (latency) in the host. The chain is Universal stress protein MT2698 from Mycobacterium tuberculosis (strain CDC 1551 / Oshkosh).